Consider the following 155-residue polypeptide: Protein FAM201A (155 aa).

The tract at residues 130–155 is disordered; sequence QDQGCGQHRPHSPRLVDIALPGGGWT.

The polypeptide is Protein FAM201A (FAM201A) (Homo sapiens (Human)).